The chain runs to 353 residues: Photosystem II D2 protein (353 aa).

The residue at position 2 (Thr2) is an N-acetylthreonine. Position 2 is a phosphothreonine (Thr2). Residues 41–61 (CAYFALGGWFTGTTFVTSWYT) form a helical membrane-spanning segment. His118 contributes to the chlorophyll a binding site. Residues 125 to 141 (GFMLRQFELARSVQLRP) form a helical membrane-spanning segment. Residues Gln130 and Asn143 each coordinate pheophytin a. The helical transmembrane segment at 153-166 (VFVSVFLIYPLGQS) threads the bilayer. His198 is a binding site for chlorophyll a. The helical transmembrane segment at 208 to 228 (AALLCAIHGATVENTLFEDGD) threads the bilayer. The a plastoquinone site is built by His215 and Phe262. Position 215 (His215) interacts with Fe cation. His269 provides a ligand contact to Fe cation. A helical membrane pass occupies residues 279–295 (GLWMSALGVVGLALNLR).

Belongs to the reaction center PufL/M/PsbA/D family. As to quaternary structure, PSII is composed of 1 copy each of membrane proteins PsbA, PsbB, PsbC, PsbD, PsbE, PsbF, PsbH, PsbI, PsbJ, PsbK, PsbL, PsbM, PsbT, PsbX, PsbY, PsbZ, Psb30/Ycf12, at least 3 peripheral proteins of the oxygen-evolving complex and a large number of cofactors. It forms dimeric complexes. The cofactor is The D1/D2 heterodimer binds P680, chlorophylls that are the primary electron donor of PSII, and subsequent electron acceptors. It shares a non-heme iron and each subunit binds pheophytin, quinone, additional chlorophylls, carotenoids and lipids. There is also a Cl(-1) ion associated with D1 and D2, which is required for oxygen evolution. The PSII complex binds additional chlorophylls, carotenoids and specific lipids..

The protein localises to the plastid. The protein resides in the chloroplast thylakoid membrane. The enzyme catalyses 2 a plastoquinone + 4 hnu + 2 H2O = 2 a plastoquinol + O2. In terms of biological role, photosystem II (PSII) is a light-driven water:plastoquinone oxidoreductase that uses light energy to abstract electrons from H(2)O, generating O(2) and a proton gradient subsequently used for ATP formation. It consists of a core antenna complex that captures photons, and an electron transfer chain that converts photonic excitation into a charge separation. The D1/D2 (PsbA/PsbD) reaction center heterodimer binds P680, the primary electron donor of PSII as well as several subsequent electron acceptors. D2 is needed for assembly of a stable PSII complex. The protein is Photosystem II D2 protein of Pelargonium hortorum (Common geranium).